A 275-amino-acid chain; its full sequence is Putative pyruvate, phosphate dikinase regulatory protein (275 aa).

149 to 156 (GVSRTSKT) lines the ADP pocket.

The protein belongs to the pyruvate, phosphate/water dikinase regulatory protein family. PDRP subfamily.

It carries out the reaction N(tele)-phospho-L-histidyl/L-threonyl-[pyruvate, phosphate dikinase] + ADP = N(tele)-phospho-L-histidyl/O-phospho-L-threonyl-[pyruvate, phosphate dikinase] + AMP + H(+). The enzyme catalyses N(tele)-phospho-L-histidyl/O-phospho-L-threonyl-[pyruvate, phosphate dikinase] + phosphate + H(+) = N(tele)-phospho-L-histidyl/L-threonyl-[pyruvate, phosphate dikinase] + diphosphate. In terms of biological role, bifunctional serine/threonine kinase and phosphorylase involved in the regulation of the pyruvate, phosphate dikinase (PPDK) by catalyzing its phosphorylation/dephosphorylation. This chain is Putative pyruvate, phosphate dikinase regulatory protein, found in Levilactobacillus brevis (strain ATCC 367 / BCRC 12310 / CIP 105137 / JCM 1170 / LMG 11437 / NCIMB 947 / NCTC 947) (Lactobacillus brevis).